The chain runs to 202 residues: Ribosome maturation factor RimM (202 aa).

The 82-residue stretch at 121–202 folds into the PRC barrel domain; the sequence is ADEYYWVDLI…CITVDWQPDY (82 aa).

Belongs to the RimM family. In terms of assembly, binds ribosomal protein uS19.

Its subcellular location is the cytoplasm. In terms of biological role, an accessory protein needed during the final step in the assembly of 30S ribosomal subunit, possibly for assembly of the head region. Essential for efficient processing of 16S rRNA. May be needed both before and after RbfA during the maturation of 16S rRNA. It has affinity for free ribosomal 30S subunits but not for 70S ribosomes. This chain is Ribosome maturation factor RimM, found in Polaromonas naphthalenivorans (strain CJ2).